Reading from the N-terminus, the 271-residue chain is High mobility group protein homolog TDP-1 (271 aa).

Residues 8–63 form the DEK-C domain; sequence GPLPTDIEETVITIMREEGVRYITAKILRMRLESKYQMEFGPHKAAIDDIVARAMQ. A disordered region spans residues 75–118; it reads LKEKDASKSSGGKGSKRARSAGAEAPSKTKKEMTEKPKKPADYP. Over residues 101–116 the composition is skewed to basic and acidic residues; it reads SKTKKEMTEKPKKPAD. 2 DNA-binding regions (HMG box) span residues 118–186 and 206–270; these read PKPA…DEYK and PKRA…AALP.

It localises to the nucleus. Unknown. May play a role in transcription and/or DNA replication. It is not known whether this protein is DNA sequence binding-specific or not. The sequence is that of High mobility group protein homolog TDP-1 from Trypanosoma brucei rhodesiense.